Reading from the N-terminus, the 300-residue chain is LysM and putative peptidoglycan-binding domain-containing protein 3 (300 aa).

Residues 1–216 (MAGRNQNRTA…PYYGADWGMG (216 aa)) lie on the Extracellular side of the membrane. Asn-7 and Asn-26 each carry an N-linked (GlcNAc...) asparagine glycan. Residue Ser-55 is modified to Phosphoserine. The 45-residue stretch at 65–109 (LTKDIQEGDTLNAVALQYCCTVADIKRVNNLISDQDFFALRSIKI) folds into the LysM domain. A disordered region spans residues 136-157 (PYFQEQDTVPANDSPSSSESAG). A compositionally biased stretch (polar residues) spans 140 to 156 (EQDTVPANDSPSSSESA). N-linked (GlcNAc...) asparagine glycosylation is present at Asn-199. The chain crosses the membrane as a helical span at residues 217–237 (WWTAVVIMLIVGIITPVFYLL). The Cytoplasmic segment spans residues 238-300 (YYEILAKVDV…LYRQDPQARD (63 aa)). The disordered stretch occupies residues 253–300 (VDSSHLHPGLTPPSHHREMGNAIGPTKGIPVGQQDDHRLYRQDPQARD). Residues 286-300 (QDDHRLYRQDPQARD) show a composition bias toward basic and acidic residues.

It is found in the cell membrane. Its subcellular location is the golgi apparatus. In terms of biological role, essential for Golgi structural integrity. This Rattus norvegicus (Rat) protein is LysM and putative peptidoglycan-binding domain-containing protein 3 (Lysmd3).